A 305-amino-acid chain; its full sequence is MSAIDKHAVKQFLMSLQDSICQQLEQEDGKAVFVEDAWQREKGERLGGGGRTRVLRDGHIFEQGGVNFSHVEGNEMPASATAHRPELAGRRFEAMGVSLVIHPKNPYVPTSHANVRFFIAEKDGEDPIWWFGGGFDLTPFYPFDEDCQSWHDTAKQLCAPFGDEVYPEHKAWCDKYFFLPHRNETRGVGGLFFDDLNQWEFDKCFDYIKAVGEGYCQAYLPIVSRRKDIEFGEREREFQLYRRGRYVEFNLVYDRGTLFGLQSGGRTESILMSMPPLARWEYSYEPQTGSPEAELYERYLTPREW.

Residue Ser98 coordinates substrate. The a divalent metal cation site is built by His102 and His112. The active-site Proton donor is the His112. 114 to 116 (NVR) lines the substrate pocket. Positions 151 and 181 each coordinate a divalent metal cation. The interval 246–281 (YVEFNLVYDRGTLFGLQSGGRTESILMSMPPLARWE) is important for dimerization. 264 to 266 (GGR) is a substrate binding site.

This sequence belongs to the aerobic coproporphyrinogen-III oxidase family. Homodimer. It depends on a divalent metal cation as a cofactor.

The protein localises to the cytoplasm. The catalysed reaction is coproporphyrinogen III + O2 + 2 H(+) = protoporphyrinogen IX + 2 CO2 + 2 H2O. It functions in the pathway porphyrin-containing compound metabolism; protoporphyrin-IX biosynthesis; protoporphyrinogen-IX from coproporphyrinogen-III (O2 route): step 1/1. Its function is as follows. Involved in the heme biosynthesis. Catalyzes the aerobic oxidative decarboxylation of propionate groups of rings A and B of coproporphyrinogen-III to yield the vinyl groups in protoporphyrinogen-IX. The polypeptide is Oxygen-dependent coproporphyrinogen-III oxidase (Vibrio campbellii (strain ATCC BAA-1116)).